Reading from the N-terminus, the 249-residue chain is 4-hydroxy-tetrahydrodipicolinate reductase (249 aa).

Residues 77 to 79 (ATT) and 101 to 104 (SYNT) each bind NAD(+). Residue His-133 is the Proton donor/acceptor of the active site. A (S)-2,3,4,5-tetrahydrodipicolinate-binding site is contributed by His-134. Lys-137 functions as the Proton donor in the catalytic mechanism. 143–144 (GT) is a binding site for (S)-2,3,4,5-tetrahydrodipicolinate.

The protein belongs to the DapB family.

The protein localises to the cytoplasm. It catalyses the reaction (S)-2,3,4,5-tetrahydrodipicolinate + NAD(+) + H2O = (2S,4S)-4-hydroxy-2,3,4,5-tetrahydrodipicolinate + NADH + H(+). The catalysed reaction is (S)-2,3,4,5-tetrahydrodipicolinate + NADP(+) + H2O = (2S,4S)-4-hydroxy-2,3,4,5-tetrahydrodipicolinate + NADPH + H(+). The protein operates within amino-acid biosynthesis; L-lysine biosynthesis via DAP pathway; (S)-tetrahydrodipicolinate from L-aspartate: step 4/4. Its function is as follows. Catalyzes the conversion of 4-hydroxy-tetrahydrodipicolinate (HTPA) to tetrahydrodipicolinate. The sequence is that of 4-hydroxy-tetrahydrodipicolinate reductase from Exiguobacterium sp. (strain ATCC BAA-1283 / AT1b).